The following is a 56-amino-acid chain: Ovomucoid (56 aa).

Residues 6–56 (VDCSEYPKPACTMEQRPLCGSDNKTYGNKCNFCNAVVESNGTLTLSHFGKC) form the Kazal-like domain. Cystine bridges form between C8–C38, C16–C35, and C24–C56. N45 carries N-linked (GlcNAc...) asparagine glycosylation.

It localises to the secreted. This Afropavo congensis (Congo peafowl) protein is Ovomucoid.